Consider the following 489-residue polypeptide: Probable transporter MCH1 (489 aa).

The next 3 membrane-spanning stretches (helical) occupy residues 30–50, 68–88, and 92–112; these read IAYIFALFAAITSGFVSLISL, MIVTVINMGMYLTPPILGIIA, and GPITLSLSSVLGFIPSYAYLA. Asn123 is a glycosylation site (N-linked (GlcNAc...) asparagine). Helical transmembrane passes span 132–152, 163–183, 202–222, 279–299, 307–327, 351–371, 388–408, and 421–441; these read TLVCFFIIGVATSGLYFSALI, LLSISIPTTCYGLSSLIGSQF, VFKAFAWIYTVIGVMIWIATS, VLYIFGATIFCALGPLEMFIA, VLAGGHEPAMSSALLSIYALT, WILLLFLVVGLVTQGKIYMLS, FYIGIMQGIAYGGLFTIYPTI, and AYGTLMIAPALGSALSCLIYA. N-linked (GlcNAc...) asparagine glycosylation occurs at Asn450. The chain crosses the membrane as a helical span at residues 462 to 482; sequence ETTALEFCAAILLTVVVTVLW.

Belongs to the major facilitator superfamily.

Its subcellular location is the vacuole membrane. Probable transporter. In Candida glabrata (strain ATCC 2001 / BCRC 20586 / JCM 3761 / NBRC 0622 / NRRL Y-65 / CBS 138) (Yeast), this protein is Probable transporter MCH1 (MCH1).